The primary structure comprises 102 residues: Small ribosomal subunit protein uS10 (102 aa).

Belongs to the universal ribosomal protein uS10 family. In terms of assembly, part of the 30S ribosomal subunit.

Functionally, involved in the binding of tRNA to the ribosomes. The polypeptide is Small ribosomal subunit protein uS10 (Thermoanaerobacter pseudethanolicus (strain ATCC 33223 / 39E) (Clostridium thermohydrosulfuricum)).